Consider the following 145-residue polypeptide: Holo-[acyl-carrier-protein] synthase (145 aa).

Asp-8 and Glu-59 together coordinate Mg(2+).

Belongs to the P-Pant transferase superfamily. AcpS family. Mg(2+) is required as a cofactor.

Its subcellular location is the cytoplasm. It carries out the reaction apo-[ACP] + CoA = holo-[ACP] + adenosine 3',5'-bisphosphate + H(+). In terms of biological role, transfers the 4'-phosphopantetheine moiety from coenzyme A to a Ser of acyl-carrier-protein. This chain is Holo-[acyl-carrier-protein] synthase, found in Granulibacter bethesdensis (strain ATCC BAA-1260 / CGDNIH1).